The chain runs to 360 residues: Dual-specificity RNA methyltransferase RlmN (360 aa).

The Proton acceptor role is filled by E93. One can recognise a Radical SAM core domain in the interval 99–326 (EEDRNTLCIS…VITRSSRGAD (228 aa)). C106 and C331 are oxidised to a cystine. [4Fe-4S] cluster is bound by residues C113, C117, and C120. Residues 158-159 (GE), S190, 212-214 (SLN), and N288 contribute to the S-adenosyl-L-methionine site. Catalysis depends on C331, which acts as the S-methylcysteine intermediate.

This sequence belongs to the radical SAM superfamily. RlmN family. [4Fe-4S] cluster is required as a cofactor.

Its subcellular location is the cytoplasm. The catalysed reaction is adenosine(2503) in 23S rRNA + 2 reduced [2Fe-2S]-[ferredoxin] + 2 S-adenosyl-L-methionine = 2-methyladenosine(2503) in 23S rRNA + 5'-deoxyadenosine + L-methionine + 2 oxidized [2Fe-2S]-[ferredoxin] + S-adenosyl-L-homocysteine. The enzyme catalyses adenosine(37) in tRNA + 2 reduced [2Fe-2S]-[ferredoxin] + 2 S-adenosyl-L-methionine = 2-methyladenosine(37) in tRNA + 5'-deoxyadenosine + L-methionine + 2 oxidized [2Fe-2S]-[ferredoxin] + S-adenosyl-L-homocysteine. Functionally, specifically methylates position 2 of adenine 2503 in 23S rRNA and position 2 of adenine 37 in tRNAs. m2A2503 modification seems to play a crucial role in the proofreading step occurring at the peptidyl transferase center and thus would serve to optimize ribosomal fidelity. This chain is Dual-specificity RNA methyltransferase RlmN, found in Geobacter sulfurreducens (strain ATCC 51573 / DSM 12127 / PCA).